The primary structure comprises 467 residues: 26S proteasome regulatory subunit 7 homolog (467 aa).

Disordered regions lie at residues 1-26 (MPPK…DDKI) and 108-140 (GNGE…DEDD). A compositionally biased stretch (low complexity) spans 117 to 134 (TDNNNSGNSNSNSNQQST). Phosphoserine is present on residues S164 and S231. 250 to 257 (GPPGTGKT) is a binding site for ATP.

This sequence belongs to the AAA ATPase family. In terms of assembly, interacts with UBR1 and CIC1. The N-terminus is blocked.

Its subcellular location is the cytoplasm. The protein localises to the nucleus. The 26S proteasome is involved in the ATP-dependent degradation of ubiquitinated proteins. The regulatory (or ATPase) complex confers ATP dependency and substrate specificity to the 26S complex. This chain is 26S proteasome regulatory subunit 7 homolog (RPT1), found in Saccharomyces cerevisiae (strain ATCC 204508 / S288c) (Baker's yeast).